We begin with the raw amino-acid sequence, 199 residues long: 7-methyl-GTP pyrophosphatase (199 aa).

The Proton acceptor role is filled by D76.

The protein belongs to the Maf family. YceF subfamily. A divalent metal cation is required as a cofactor.

The protein resides in the cytoplasm. The enzyme catalyses N(7)-methyl-GTP + H2O = N(7)-methyl-GMP + diphosphate + H(+). Its function is as follows. Nucleoside triphosphate pyrophosphatase that hydrolyzes 7-methyl-GTP (m(7)GTP). May have a dual role in cell division arrest and in preventing the incorporation of modified nucleotides into cellular nucleic acids. The sequence is that of 7-methyl-GTP pyrophosphatase from Rhizobium johnstonii (strain DSM 114642 / LMG 32736 / 3841) (Rhizobium leguminosarum bv. viciae).